The sequence spans 566 residues: Good for full DBP5 activity protein 2 (566 aa).

Residues 1–16 (MQVQKMVRDNSNNGSD) show a composition bias toward polar residues. The segment at 1–41 (MQVQKMVRDNSNNGSDKSVHWERRNNNGAGPRYRSRSGNTG) is disordered.

Functionally, high-copy suppressor of DBP5 mutation. The protein is Good for full DBP5 activity protein 2 (GFD2) of Saccharomyces cerevisiae (strain ATCC 204508 / S288c) (Baker's yeast).